A 443-amino-acid chain; its full sequence is 3-isopropylmalate dehydratase large subunit (443 aa).

[4Fe-4S] cluster contacts are provided by cysteine 347, cysteine 407, and cysteine 410.

The protein belongs to the aconitase/IPM isomerase family. LeuC type 1 subfamily. As to quaternary structure, heterodimer of LeuC and LeuD. It depends on [4Fe-4S] cluster as a cofactor.

The enzyme catalyses (2R,3S)-3-isopropylmalate = (2S)-2-isopropylmalate. The protein operates within amino-acid biosynthesis; L-leucine biosynthesis; L-leucine from 3-methyl-2-oxobutanoate: step 2/4. In terms of biological role, catalyzes the isomerization between 2-isopropylmalate and 3-isopropylmalate, via the formation of 2-isopropylmaleate. In Buchnera aphidicola subsp. Uroleucon obscurum, this protein is 3-isopropylmalate dehydratase large subunit.